Here is a 203-residue protein sequence, read N- to C-terminus: GTP-binding protein ypt1 (203 aa).

GTP-binding positions include 15 to 23 (GDSGVGKSC), 33 to 40 (YTESYIST), 63 to 67 (DTAGQ), 121 to 124 (NKSD), and 151 to 153 (SAK). The Effector region signature appears at 37 to 45 (YISTIGVDF). A disordered region spans residues 180–203 (NNTKASVNVSPGHGVSNNSSGGCC). 2 S-geranylgeranyl cysteine lipidation sites follow: cysteine 202 and cysteine 203.

It belongs to the small GTPase superfamily. Rab family.

The protein resides in the endoplasmic reticulum membrane. It is found in the golgi apparatus membrane. It localises to the cytoplasm. The protein localises to the preautophagosomal structure membrane. With respect to regulation, rab activation is generally mediated by a guanine exchange factor (GEF), while inactivation through hydrolysis of bound GTP is catalyzed by a GTPase activating protein (GAP). In terms of biological role, the small GTPases Rab are key regulators of intracellular membrane trafficking, from the formation of transport vesicles to their fusion with membranes. Rabs cycle between an inactive GDP-bound form and an active GTP-bound form that is able to recruit to membranes different set of downstream effectors directly responsible for vesicle formation, movement, tethering and fusion. Ypt-1 regulates the trafficking of secretory vesicles from the endoplasmic reticulum (ER) to the Golgi. Plays a role in the initial events of the autophagic vacuole development which take place at specialized regions of the endoplasmic reticulum. Also involved in the recycling of membrane proteins. The polypeptide is GTP-binding protein ypt1 (ypt-1) (Neurospora crassa (strain ATCC 24698 / 74-OR23-1A / CBS 708.71 / DSM 1257 / FGSC 987)).